We begin with the raw amino-acid sequence, 477 residues long: PTS system MurNAc-GlcNAc-specific EIIBC component (477 aa).

One can recognise a PTS EIIB type-1 domain in the interval 5–87 (QQLAHHILDA…VKLSGVQLGE (83 aa)). The active-site Phosphocysteine intermediate; for EIIB activity is the Cys-27. The segment at 91–113 (HRSNTSNIKNQAQQNKREFQQKR) is disordered. The segment covering 92 to 104 (RSNTSNIKNQAQQ) has biased composition (polar residues). Residues 123–477 (KSIANIFIPL…EMRNLNKLGD (355 aa)) enclose the PTS EIIC type-1 domain. 10 consecutive transmembrane segments (helical) span residues 128–148 (IFIPLIPAFIGAGLIGGIAAV), 167–187 (VAVLNVIKDGMLAYLAIFTGF), 192–212 (VFGATPGLGGVIGGTTLLTGI), 227–247 (LIAGQGGIIGVILAVWLLSII), 267–287 (ISLLIIGLLTIFFFMPIAGFI), 298–318 (VIGVGGIFSGFIIGAFFLPLV), 342–362 (LLPIAAMAGAGQVGAALALWV), 377–397 (ALPVGFLGIGEPLIYGVTLPL), 401–421 (FITACLGGGIGGAVIGGIGHI), and 443–463 (LGYIIGLLSAYLAGFIFTYFF).

It localises to the cell membrane. The enzyme catalyses N-acetyl-beta-D-muramate-(1-&gt;4)-N-acetyl-D-glucosamine(out) + N(pros)-phospho-L-histidyl-[protein] = 6-phospho-N-acetyl-beta-D-muramate-(1-&gt;4)-N-acetyl-D-glucosamine(in) + L-histidyl-[protein]. It participates in cell wall biogenesis; peptidoglycan recycling. The phosphoenolpyruvate-dependent sugar phosphotransferase system (sugar PTS), a major carbohydrate active transport system, catalyzes the phosphorylation of incoming sugar substrates concomitantly with their translocation across the cell membrane. This system is involved in the uptake and phosphorylation of MurNAc-GlcNAc, the principle peptidoglycan turnover product of S.aureus, yielding cytoplasmic MurNAc 6P-GlcNAc. The polypeptide is PTS system MurNAc-GlcNAc-specific EIIBC component (Staphylococcus haemolyticus (strain JCSC1435)).